Here is a 66-residue protein sequence, read N- to C-terminus: UPF0337 protein bsl1473 (66 aa).

This sequence belongs to the UPF0337 (CsbD) family.

In Bradyrhizobium diazoefficiens (strain JCM 10833 / BCRC 13528 / IAM 13628 / NBRC 14792 / USDA 110), this protein is UPF0337 protein bsl1473.